Here is a 420-residue protein sequence, read N- to C-terminus: Subtilisin (420 aa).

The first 31 residues, 1–31 (MKRSGKIFTTAMLAVTLMMPAMGVSANEGNA), serve as a signal peptide directing secretion. Positions 32–111 (AAEGNEKFRV…DKPEALYNAM (80 aa)) are excised as a propeptide. Residue Gln115 coordinates Ca(2+). One can recognise a Peptidase S8 domain in the interval 118–420 (PWGIKAIYNN…ASGFGFATVQ (303 aa)). Residue Asp145 is the Charge relay system of the active site. Residue Asp154 participates in Ca(2+) binding. Residues His182 and Ser360 each act as charge relay system in the active site.

Belongs to the peptidase S8 family. It depends on Ca(2+) as a cofactor.

Its subcellular location is the secreted. It carries out the reaction Hydrolysis of proteins with broad specificity for peptide bonds, and a preference for a large uncharged residue in P1. Hydrolyzes peptide amides.. Its function is as follows. Subtilisin is an extracellular alkaline serine protease, it catalyzes the hydrolysis of proteins and peptide amides. The chain is Subtilisin (sub1) from Bacillus sp. (strain TA39).